A 242-amino-acid polypeptide reads, in one-letter code: tRNA (guanine-N(1)-)-methyltransferase (242 aa).

S-adenosyl-L-methionine is bound by residues Gly111 and 130–135 (IGDYVL).

The protein belongs to the RNA methyltransferase TrmD family. As to quaternary structure, homodimer.

Its subcellular location is the cytoplasm. It carries out the reaction guanosine(37) in tRNA + S-adenosyl-L-methionine = N(1)-methylguanosine(37) in tRNA + S-adenosyl-L-homocysteine + H(+). In terms of biological role, specifically methylates guanosine-37 in various tRNAs. The chain is tRNA (guanine-N(1)-)-methyltransferase from Onion yellows phytoplasma (strain OY-M).